Reading from the N-terminus, the 308-residue chain is Ribosomal RNA small subunit methyltransferase H (308 aa).

S-adenosyl-L-methionine is bound by residues glycine 38–histidine 40, aspartate 58, phenylalanine 82, aspartate 99, and glutamine 106.

Belongs to the methyltransferase superfamily. RsmH family.

It localises to the cytoplasm. It catalyses the reaction cytidine(1402) in 16S rRNA + S-adenosyl-L-methionine = N(4)-methylcytidine(1402) in 16S rRNA + S-adenosyl-L-homocysteine + H(+). Functionally, specifically methylates the N4 position of cytidine in position 1402 (C1402) of 16S rRNA. The protein is Ribosomal RNA small subunit methyltransferase H of Acidovorax ebreus (strain TPSY) (Diaphorobacter sp. (strain TPSY)).